Reading from the N-terminus, the 220-residue chain is Probable GTP-binding protein EngB (220 aa).

The EngB-type G domain occupies 26–200 (EGIEIAFAGR…RAKLDEWYAP (175 aa)). GTP-binding positions include 34-41 (GRSNAGKS), 61-65 (GRTQL), 79-82 (DLPG), 146-149 (TKAD), and 179-181 (FSS). Residues S41 and T63 each coordinate Mg(2+).

The protein belongs to the TRAFAC class TrmE-Era-EngA-EngB-Septin-like GTPase superfamily. EngB GTPase family. It depends on Mg(2+) as a cofactor.

In terms of biological role, necessary for normal cell division and for the maintenance of normal septation. This chain is Probable GTP-binding protein EngB, found in Vibrio cholerae serotype O1 (strain ATCC 39315 / El Tor Inaba N16961).